Reading from the N-terminus, the 98-residue chain is NADH-ubiquinone oxidoreductase chain 4L (98 aa).

A run of 3 helical transmembrane segments spans residues 1–21, 29–49, and 61–81; these read MSLIHINVFLAFTTSLMGLLM, SLLCLEGMMLSLFIMATMMVL, and IILLVFAACEAALGLSLLVMI.

The protein belongs to the complex I subunit 4L family. In terms of assembly, core subunit of respiratory chain NADH dehydrogenase (Complex I) which is composed of 45 different subunits.

It localises to the mitochondrion inner membrane. It catalyses the reaction a ubiquinone + NADH + 5 H(+)(in) = a ubiquinol + NAD(+) + 4 H(+)(out). In terms of biological role, core subunit of the mitochondrial membrane respiratory chain NADH dehydrogenase (Complex I) which catalyzes electron transfer from NADH through the respiratory chain, using ubiquinone as an electron acceptor. Part of the enzyme membrane arm which is embedded in the lipid bilayer and involved in proton translocation. This Ceratotherium simum (White rhinoceros) protein is NADH-ubiquinone oxidoreductase chain 4L (MT-ND4L).